Consider the following 787-residue polypeptide: Transcription factor SOX-6 (787 aa).

The segment at 1–46 is disordered; that stretch reads MSSKQATSPFACAADGEDAMTQDLTSREKEEGSDQHVASHLPLHPI. The span at 25–34 shows a compositional bias: basic and acidic residues; that stretch reads TSREKEEGSD. At Thr119 the chain carries Phosphothreonine. Residues 184-262 adopt a coiled-coil conformation; it reads LAEKERQLST…LLQQQIQVQG (79 aa). The tract at residues 340–429 is disordered; the sequence is PGAKMPSTPQ…KSSIPSPIGG (90 aa). The segment covering 352–361 has biased composition (polar residues); the sequence is NTAGTVSPTG. At Ser358 the chain carries Phosphoserine. Position 360 is a phosphothreonine (Thr360). Residues Lys363 and Lys376 each participate in a glycyl lysine isopeptide (Lys-Gly) (interchain with G-Cter in SUMO) cross-link. 2 positions are modified to phosphoserine: Ser398 and Ser401. The span at 398 to 420 shows a compositional bias: polar residues; that stretch reads SPTSPTQNLFPASKTSPVNLPNK. A DNA-binding region (HMG box) is located at residues 580–648; the sequence is IKRPMNAFMV…IHLEKYPNYK (69 aa). The span at 712 to 740 shows a compositional bias: polar residues; it reads TPSPQMTSDCSSTSASPEPSLPVIQSTYG. Residues 712-787 form a disordered region; that stretch reads TPSPQMTSDC…NEAPEAVSAN (76 aa). Over residues 755 to 768 the composition is skewed to acidic residues; sequence NGEDEMEMYDDYED.

As to quaternary structure, homodimer. Interacts with DAZAP2. May interact with CENPK. Sumoylation inhibits the transcriptional activity.

The protein resides in the nucleus. The protein localises to the cytoplasm. Transcription factor that plays a key role in several developmental processes, including neurogenesis, chondrocytes differentiation and cartilage formation. Specifically binds the 5'-AACAAT-3' DNA motif present in enhancers and super-enhancers and promotes expression of genes important for chondrogenesis. Required for overt chondrogenesis when condensed prechondrocytes differentiate into early stage chondrocytes: SOX5 and SOX6 cooperatively bind with SOX9 on active enhancers and super-enhancers associated with cartilage-specific genes, and thereby potentiate SOX9's ability to transactivate. Not involved in precartilaginous condensation, the first step in chondrogenesis, during which skeletal progenitors differentiate into prechondrocytes. Together with SOX5, required to form and maintain a pool of highly proliferating chondroblasts between epiphyses and metaphyses, to form columnar chondroblasts, delay chondrocyte prehypertrophy but promote hypertrophy, and to delay terminal differentiation of chondrocytes on contact with ossification fronts. Binds to the proximal promoter region of the myelin protein MPZ gene, and is thereby involved in the differentiation of oligodendroglia in the developing spinal tube. Binds to the gene promoter of MBP and acts as a transcriptional repressor. The polypeptide is Transcription factor SOX-6 (Pongo abelii (Sumatran orangutan)).